The sequence spans 702 residues: Threonine--tRNA ligase (702 aa).

Residues 1–30 (MSAPVHPVPGADGGDPLRPATPGLRSPQVP) form a disordered region. A TGS domain is found at 15–84 (DPLRPATPGL…DVDVEVTPVP (70 aa)). Positions 279–585 (DHRKLGIELD…LTEHYAGAFP (307 aa)) are catalytic. Positions 384, 435, and 562 each coordinate Zn(2+).

It belongs to the class-II aminoacyl-tRNA synthetase family. As to quaternary structure, homodimer. The cofactor is Zn(2+).

The protein resides in the cytoplasm. The enzyme catalyses tRNA(Thr) + L-threonine + ATP = L-threonyl-tRNA(Thr) + AMP + diphosphate + H(+). Its function is as follows. Catalyzes the attachment of threonine to tRNA(Thr) in a two-step reaction: L-threonine is first activated by ATP to form Thr-AMP and then transferred to the acceptor end of tRNA(Thr). Also edits incorrectly charged L-seryl-tRNA(Thr). The chain is Threonine--tRNA ligase from Mycobacterium leprae (strain Br4923).